Here is a 293-residue protein sequence, read N- to C-terminus: Small ribosomal subunit protein uS2 (293 aa).

Positions 219-293 (IASAKPDEPY…WATPKTEDWA (75 aa)) are disordered.

The protein belongs to the universal ribosomal protein uS2 family. Component of the small ribosomal subunit. Mature ribosomes consist of a small (40S) and a large (60S) subunit. The 40S subunit contains about 33 different proteins and 1 molecule of RNA (18S). The 60S subunit contains about 49 different proteins and 3 molecules of RNA (28S, 5.8S and 5S). Interacts with ribosomal protein S21.

Its subcellular location is the cytoplasm. Its function is as follows. Required for the assembly and/or stability of the 40S ribosomal subunit. Required for the processing of the 20S rRNA-precursor to mature 18S rRNA in a late step of the maturation of 40S ribosomal subunits. The polypeptide is Small ribosomal subunit protein uS2 (Hydra viridissima (Green hydra)).